We begin with the raw amino-acid sequence, 273 residues long: Anthranilate synthase beta subunit 2, chloroplastic (273 aa).

Residues 1-47 constitute a chloroplast transit peptide; it reads MATAARLLPKIQSPASPAVAEARRRRPSSLRLGVTSGPARTLKQKLV. Residues 15–35 form a disordered region; it reads ASPAVAEARRRRPSSLRLGVT. Residues 70-269 enclose the Glutamine amidotransferase type-1 domain; the sequence is PIIVIDNYDS…IKIIEGYEAL (200 aa). 121–123 serves as a coordination point for L-glutamine; sequence GPG. Cys-148 functions as the Nucleophile in the catalytic mechanism. Residues Gln-152 and 202-203 contribute to the L-glutamine site; that span reads SL. Residues His-243 and Glu-245 contribute to the active site.

In terms of assembly, heterotetramer consisting of two non-identical subunits: a beta subunit and a large alpha subunit. In terms of tissue distribution, expressed in roots and leaves.

It is found in the plastid. Its subcellular location is the chloroplast. It carries out the reaction chorismate + L-glutamine = anthranilate + pyruvate + L-glutamate + H(+). It participates in amino-acid biosynthesis; L-tryptophan biosynthesis; L-tryptophan from chorismate: step 1/5. Part of a heterotetrameric complex that catalyzes the two-step biosynthesis of anthranilate, an intermediate in the biosynthesis of L-tryptophan. In the first step, the glutamine-binding beta subunit of anthranilate synthase (AS) provides the glutamine amidotransferase activity which generates ammonia as a substrate that, along with chorismate, is used in the second step, catalyzed by the large alpha subunit of AS to produce anthranilate. The protein is Anthranilate synthase beta subunit 2, chloroplastic of Oryza sativa subsp. japonica (Rice).